The chain runs to 316 residues: Ribonuclease Z (316 aa).

Residues H63, H65, D67, H68, H143, D213, and H271 each contribute to the Zn(2+) site. D67 acts as the Proton acceptor in catalysis.

It belongs to the RNase Z family. Homodimer. Zn(2+) is required as a cofactor.

It carries out the reaction Endonucleolytic cleavage of RNA, removing extra 3' nucleotides from tRNA precursor, generating 3' termini of tRNAs. A 3'-hydroxy group is left at the tRNA terminus and a 5'-phosphoryl group is left at the trailer molecule.. Its function is as follows. Zinc phosphodiesterase, which displays some tRNA 3'-processing endonuclease activity. Probably involved in tRNA maturation, by removing a 3'-trailer from precursor tRNA. The polypeptide is Ribonuclease Z (Bacteroides thetaiotaomicron (strain ATCC 29148 / DSM 2079 / JCM 5827 / CCUG 10774 / NCTC 10582 / VPI-5482 / E50)).